A 361-amino-acid polypeptide reads, in one-letter code: Eukaryotic translation initiation factor 3 subunit F (361 aa).

The interval 1-86 (MATPAVPVSA…PAPALPGPAL (86 aa)) is disordered. The residue at position 2 (Ala2) is an N-acetylalanine. Pro residues-rich tracts occupy residues 9-20 (SAPPATPAPVPA) and 30-40 (VPAPTPAPAAA). The span at 41–78 (PVPAAAPASSSDPAAAAATTAAPGQTPASAQAPAQTPA) shows a compositional bias: low complexity. Ser50 is modified (phosphoserine; by CDK11; in vitro). The 131-residue stretch at 96-226 (VRLHPVILAS…IKAYVSTLMG (131 aa)) folds into the MPN domain. At Lys242 the chain carries N6-acetyllysine. Ser262 carries the post-translational modification Phosphoserine.

This sequence belongs to the eIF-3 subunit F family. In terms of assembly, component of the eukaryotic translation initiation factor 3 (eIF-3) complex, which is composed of 13 subunits: EIF3A, EIF3B, EIF3C, EIF3D, EIF3E, EIF3F, EIF3G, EIF3H, EIF3I, EIF3J, EIF3K, EIF3L and EIF3M. The eIF-3 complex appears to include 3 stable modules: module A is composed of EIF3A, EIF3B, EIF3G and EIF3I; module B is composed of EIF3F, EIF3H, and EIF3M; and module C is composed of EIF3C, EIF3D, EIF3E, EIF3K and EIF3L. EIF3C of module C binds EIF3B of module A and EIF3H of module B, thereby linking the three modules. EIF3J is a labile subunit that binds to the eIF-3 complex via EIF3B. The eIF-3 complex interacts with RPS6KB1 under conditions of nutrient depletion. Mitogenic stimulation leads to binding and activation of a complex composed of MTOR and RPTOR, leading to phosphorylation and release of RPS6KB1 and binding of EIF4B to eIF-3. Interacts with RNF139; the interaction leads to protein translation inhibitions in a ubiquitination-dependent manner. Interacts with DTX1, the interaction is required for deubiquitinating activity towards NOTCH1. In terms of processing, phosphorylation is enhanced upon serum stimulation. Phosphorylated during apoptosis by caspase-processed CDK11.

It localises to the cytoplasm. It carries out the reaction Thiol-dependent hydrolysis of ester, thioester, amide, peptide and isopeptide bonds formed by the C-terminal Gly of ubiquitin (a 76-residue protein attached to proteins as an intracellular targeting signal).. Functionally, component of the eukaryotic translation initiation factor 3 (eIF-3) complex, which is required for several steps in the initiation of protein synthesis. The eIF-3 complex associates with the 40S ribosome and facilitates the recruitment of eIF-1, eIF-1A, eIF-2:GTP:methionyl-tRNAi and eIF-5 to form the 43S pre-initiation complex (43S PIC). The eIF-3 complex stimulates mRNA recruitment to the 43S PIC and scanning of the mRNA for AUG recognition. The eIF-3 complex is also required for disassembly and recycling of post-termination ribosomal complexes and subsequently prevents premature joining of the 40S and 60S ribosomal subunits prior to initiation. The eIF-3 complex specifically targets and initiates translation of a subset of mRNAs involved in cell proliferation, including cell cycling, differentiation and apoptosis, and uses different modes of RNA stem-loop binding to exert either translational activation or repression. In terms of biological role, deubiquitinates activated NOTCH1, promoting its nuclear import, thereby acting as a positive regulator of Notch signaling. The polypeptide is Eukaryotic translation initiation factor 3 subunit F (Pan troglodytes (Chimpanzee)).